The chain runs to 74 residues: Peptide BmKb1 (74 aa).

The signal sequence occupies residues 1 to 22 (MEIKYLLTVFLVLLIVSDHCQA). Lys-40 carries the lysine amide modification. Positions 46-74 (DLNGYIDHFKNFRKRDAELEELLSKLPIY) are excised as a propeptide.

It belongs to the non-disulfide-bridged peptide (NDBP) superfamily. Short antimicrobial peptide (group 4) family. Expressed by the venom gland.

Its subcellular location is the secreted. The protein localises to the target cell membrane. Its function is as follows. Has antibacterial activity against Gram-positive bacteria S.aureus, M.luteus, B.subtilis, and Gram-negative bacteria E.coli, and P.aeruginosa. The polypeptide is Peptide BmKb1 (Olivierus martensii (Manchurian scorpion)).